The sequence spans 530 residues: NADH-quinone oxidoreductase subunit C/D (530 aa).

The interval 1-144 (MEEIKYIEPA…NPLRMDNEET (144 aa)) is NADH dehydrogenase I subunit C. An NADH dehydrogenase I subunit D region spans residues 171–530 (EYVVNIGPQH…LDYVVPDIDR (360 aa)).

This sequence in the N-terminal section; belongs to the complex I 30 kDa subunit family. In the C-terminal section; belongs to the complex I 49 kDa subunit family. As to quaternary structure, NDH-1 is composed of 13 different subunits. Subunits NuoB, CD, E, F, and G constitute the peripheral sector of the complex.

Its subcellular location is the cell inner membrane. The enzyme catalyses a quinone + NADH + 5 H(+)(in) = a quinol + NAD(+) + 4 H(+)(out). Its function is as follows. NDH-1 shuttles electrons from NADH, via FMN and iron-sulfur (Fe-S) centers, to quinones in the respiratory chain. The immediate electron acceptor for the enzyme in this species is believed to be a menaquinone. Couples the redox reaction to proton translocation (for every two electrons transferred, four hydrogen ions are translocated across the cytoplasmic membrane), and thus conserves the redox energy in a proton gradient. The protein is NADH-quinone oxidoreductase subunit C/D of Bacteroides fragilis (strain ATCC 25285 / DSM 2151 / CCUG 4856 / JCM 11019 / LMG 10263 / NCTC 9343 / Onslow / VPI 2553 / EN-2).